Consider the following 291-residue polypeptide: 4-hydroxy-tetrahydrodipicolinate synthase (291 aa).

T45 provides a ligand contact to pyruvate. Y131 serves as the catalytic Proton donor/acceptor. The active-site Schiff-base intermediate with substrate is the K159. Residue I202 coordinates pyruvate.

Belongs to the DapA family. In terms of assembly, homotetramer; dimer of dimers.

The protein resides in the cytoplasm. It carries out the reaction L-aspartate 4-semialdehyde + pyruvate = (2S,4S)-4-hydroxy-2,3,4,5-tetrahydrodipicolinate + H2O + H(+). It participates in amino-acid biosynthesis; L-lysine biosynthesis via DAP pathway; (S)-tetrahydrodipicolinate from L-aspartate: step 3/4. Catalyzes the condensation of (S)-aspartate-beta-semialdehyde [(S)-ASA] and pyruvate to 4-hydroxy-tetrahydrodipicolinate (HTPA). The chain is 4-hydroxy-tetrahydrodipicolinate synthase from Methanococcoides burtonii (strain DSM 6242 / NBRC 107633 / OCM 468 / ACE-M).